The following is a 61-amino-acid chain: DNA-directed RNA polymerase subunit Rpo6 (61 aa).

The protein belongs to the archaeal Rpo6/eukaryotic RPB6 RNA polymerase subunit family. Part of the RNA polymerase complex.

It localises to the cytoplasm. It catalyses the reaction RNA(n) + a ribonucleoside 5'-triphosphate = RNA(n+1) + diphosphate. DNA-dependent RNA polymerase (RNAP) catalyzes the transcription of DNA into RNA using the four ribonucleoside triphosphates as substrates. The protein is DNA-directed RNA polymerase subunit Rpo6 of Thermoplasma acidophilum (strain ATCC 25905 / DSM 1728 / JCM 9062 / NBRC 15155 / AMRC-C165).